The sequence spans 122 residues: MSKTYFTQDHEWLSVDGQMVTVGVTHYAQEQLGDLVFVDLPQSGTKLSKGEAAAVVESVKAASDVYSPLDGEVVEINEALTDNPELVNQKAETEGWLWKMTLQDETQLEELLDEDAYKALIG.

The Lipoyl-binding domain maps to methionine 19–threonine 101. N6-lipoyllysine is present on lysine 60.

This sequence belongs to the GcvH family. In terms of assembly, the glycine cleavage system is composed of four proteins: P, T, L and H. Requires (R)-lipoate as cofactor.

Its function is as follows. The glycine cleavage system catalyzes the degradation of glycine. The H protein shuttles the methylamine group of glycine from the P protein to the T protein. The chain is Glycine cleavage system H protein from Bartonella tribocorum (strain CIP 105476 / IBS 506).